An 876-amino-acid polypeptide reads, in one-letter code: Alanine--tRNA ligase (876 aa).

K74 bears the N6-acetyllysine mark. Positions 564, 568, 666, and 670 each coordinate Zn(2+).

The protein belongs to the class-II aminoacyl-tRNA synthetase family. As to quaternary structure, homotetramer. Requires Zn(2+) as cofactor.

The protein resides in the cytoplasm. It carries out the reaction tRNA(Ala) + L-alanine + ATP = L-alanyl-tRNA(Ala) + AMP + diphosphate. In terms of biological role, catalyzes the attachment of alanine to tRNA(Ala) in a two-step reaction: alanine is first activated by ATP to form Ala-AMP and then transferred to the acceptor end of tRNA(Ala). Also edits incorrectly charged Ser-tRNA(Ala) and Gly-tRNA(Ala) via its editing domain. This Escherichia coli O157:H7 protein is Alanine--tRNA ligase.